The primary structure comprises 412 residues: Gamma-glutamyl phosphate reductase (412 aa).

This sequence belongs to the gamma-glutamyl phosphate reductase family.

The protein resides in the cytoplasm. The enzyme catalyses L-glutamate 5-semialdehyde + phosphate + NADP(+) = L-glutamyl 5-phosphate + NADPH + H(+). The protein operates within amino-acid biosynthesis; L-proline biosynthesis; L-glutamate 5-semialdehyde from L-glutamate: step 2/2. In terms of biological role, catalyzes the NADPH-dependent reduction of L-glutamate 5-phosphate into L-glutamate 5-semialdehyde and phosphate. The product spontaneously undergoes cyclization to form 1-pyrroline-5-carboxylate. The sequence is that of Gamma-glutamyl phosphate reductase from Nitratiruptor sp. (strain SB155-2).